A 120-amino-acid chain; its full sequence is NAD(P)H-quinone oxidoreductase subunit 3, chloroplastic (120 aa).

The next 3 helical transmembrane spans lie at 9–29 (IFWT…WISG), 64–84 (MFAL…PWAM), and 88–108 (VLGV…VVGL).

Belongs to the complex I subunit 3 family. NDH is composed of at least 16 different subunits, 5 of which are encoded in the nucleus.

It localises to the plastid. Its subcellular location is the chloroplast thylakoid membrane. It catalyses the reaction a plastoquinone + NADH + (n+1) H(+)(in) = a plastoquinol + NAD(+) + n H(+)(out). It carries out the reaction a plastoquinone + NADPH + (n+1) H(+)(in) = a plastoquinol + NADP(+) + n H(+)(out). In terms of biological role, NDH shuttles electrons from NAD(P)H:plastoquinone, via FMN and iron-sulfur (Fe-S) centers, to quinones in the photosynthetic chain and possibly in a chloroplast respiratory chain. The immediate electron acceptor for the enzyme in this species is believed to be plastoquinone. Couples the redox reaction to proton translocation, and thus conserves the redox energy in a proton gradient. The chain is NAD(P)H-quinone oxidoreductase subunit 3, chloroplastic from Zea mays (Maize).